The sequence spans 338 residues: UDP-3-O-acylglucosamine N-acyltransferase (338 aa).

His239 functions as the Proton acceptor in the catalytic mechanism.

Belongs to the transferase hexapeptide repeat family. LpxD subfamily. As to quaternary structure, homotrimer.

The catalysed reaction is a UDP-3-O-[(3R)-3-hydroxyacyl]-alpha-D-glucosamine + a (3R)-hydroxyacyl-[ACP] = a UDP-2-N,3-O-bis[(3R)-3-hydroxyacyl]-alpha-D-glucosamine + holo-[ACP] + H(+). Its pathway is bacterial outer membrane biogenesis; LPS lipid A biosynthesis. In terms of biological role, catalyzes the N-acylation of UDP-3-O-acylglucosamine using 3-hydroxyacyl-ACP as the acyl donor. Is involved in the biosynthesis of lipid A, a phosphorylated glycolipid that anchors the lipopolysaccharide to the outer membrane of the cell. This chain is UDP-3-O-acylglucosamine N-acyltransferase, found in Xylella fastidiosa (strain M12).